Reading from the N-terminus, the 1232-residue chain is DNA-directed RNA polymerase subunit beta (1232 aa).

Positions 1170 to 1232 (SVDEDADELE…LDLDDFGDEH (63 aa)) are disordered. Acidic residues predominate over residues 1171–1180 (VDEDADELEV). The span at 1189–1198 (PEEKEEKEKE) shows a compositional bias: basic and acidic residues. Acidic residues predominate over residues 1199-1232 (DSDEYDDLREEDVEPDLEELSLDDLDLDDFGDEH).

This sequence belongs to the RNA polymerase beta chain family. The RNAP catalytic core consists of 2 alpha, 1 beta, 1 beta' and 1 omega subunit. When a sigma factor is associated with the core the holoenzyme is formed, which can initiate transcription.

It catalyses the reaction RNA(n) + a ribonucleoside 5'-triphosphate = RNA(n+1) + diphosphate. Functionally, DNA-dependent RNA polymerase catalyzes the transcription of DNA into RNA using the four ribonucleoside triphosphates as substrates. This chain is DNA-directed RNA polymerase subunit beta, found in Clostridium botulinum (strain Hall / ATCC 3502 / NCTC 13319 / Type A).